The chain runs to 296 residues: Lipoyl synthase (296 aa).

Cys-37, Cys-42, Cys-48, Cys-63, Cys-67, Cys-70, and Ser-276 together coordinate [4Fe-4S] cluster. A Radical SAM core domain is found at 49 to 265; it reads WSKKHTTVMI…ERVAKTKGFL (217 aa).

It belongs to the radical SAM superfamily. Lipoyl synthase family. [4Fe-4S] cluster serves as cofactor.

The protein localises to the cytoplasm. It carries out the reaction [[Fe-S] cluster scaffold protein carrying a second [4Fe-4S](2+) cluster] + N(6)-octanoyl-L-lysyl-[protein] + 2 oxidized [2Fe-2S]-[ferredoxin] + 2 S-adenosyl-L-methionine + 4 H(+) = [[Fe-S] cluster scaffold protein] + N(6)-[(R)-dihydrolipoyl]-L-lysyl-[protein] + 4 Fe(3+) + 2 hydrogen sulfide + 2 5'-deoxyadenosine + 2 L-methionine + 2 reduced [2Fe-2S]-[ferredoxin]. The protein operates within protein modification; protein lipoylation via endogenous pathway; protein N(6)-(lipoyl)lysine from octanoyl-[acyl-carrier-protein]: step 2/2. In terms of biological role, catalyzes the radical-mediated insertion of two sulfur atoms into the C-6 and C-8 positions of the octanoyl moiety bound to the lipoyl domains of lipoate-dependent enzymes, thereby converting the octanoylated domains into lipoylated derivatives. The polypeptide is Lipoyl synthase (Rickettsia peacockii (strain Rustic)).